A 493-amino-acid chain; its full sequence is Sodium-coupled neutral amino acid symporter 2 (493 aa).

Topologically, residues 1 to 72 (MNNAEVLNVA…LPGTTSFGMS (72 aa)) are cytoplasmic. The interval 1–92 (MNNAEVLNVA…SGILGLSYAM (92 aa)) is regulates protein turnover upon amino acid deprivation. The chain crosses the membrane as a helical span at residues 73-92 (VFNLSNAIVGSGILGLSYAM). Asn78 is a Na(+) binding site. Residues 93 to 98 (ANTGIA) are Extracellular-facing. The helical transmembrane segment at 99–119 (LFMILLVFVTVFSLYSIHLLL) threads the bilayer. The Cytoplasmic portion of the chain corresponds to 120–154 (KTANEGGSLLYEQLGLKAFGIPGKLAASGSVTLQN). The helical transmembrane segment at 155–173 (IGAMSSYLYIVKYELPLVI) threads the bilayer. Over 174–184 (KALMDIKESNG) the chain is Extracellular. Residues 185-205 (EWYLNGDYLVIMVSLAIILPL) form a helical membrane-spanning segment. At 206–213 (SLLRNLGY) the chain is on the cytoplasmic side. A helical membrane pass occupies residues 214–234 (LGYTSGFSPLCMVFFLIVVIY). Residues 235-279 (KKFEIPCPLEAMNMTSNSSSHDHMAHNETDDEMCKPKYFVFNSQT) are Extracellular-facing. Cys241 and Cys268 form a disulfide bridge. 3 N-linked (GlcNAc...) asparagine glycosylation sites follow: Asn247, Asn251, and Asn261. A helical transmembrane segment spans residues 280–300 (VYAVPILTFSFVCHPAVLPIY). Over 301–316 (QELKGRSRRRMMNVSN) the chain is Cytoplasmic. The chain crosses the membrane as a helical span at residues 317–337 (VSFFAMFIMYLLAALFGYLTF). Topologically, residues 338–358 (YSKVEPELLHTYSKVFGAGVI) are extracellular. Residues 359-379 (FVVVRLAVLMAVTLTVPIVIF) form a helical membrane-spanning segment. Thr373 is a binding site for Na(+). At 380-400 (PIRSSLNELFCSGKDFAWIRH) the chain is on the cytoplasmic side. The chain crosses the membrane as a helical span at residues 401 to 421 (ILITFLILAFTNVLVIFVPTI). The Extracellular segment spans residues 422 to 423 (RD). A helical transmembrane segment spans residues 424–444 (IFGFIGASAAAMLVFILPSAF). Over 445–459 (YIRLVKKESMKSVQK) the chain is Cytoplasmic. A helical transmembrane segment spans residues 460–482 (IGALLFLIGGIIVMIGSMTLIIL). Over 483–493 (DWIHNSTSGGN) the chain is Extracellular.

This sequence belongs to the amino acid/polyamine transporter 2 family.

It is found in the cell membrane. The enzyme catalyses L-alanine(in) + Na(+)(in) = L-alanine(out) + Na(+)(out). The catalysed reaction is glycine(in) + Na(+)(in) = glycine(out) + Na(+)(out). It carries out the reaction L-serine(in) + Na(+)(in) = L-serine(out) + Na(+)(out). It catalyses the reaction L-proline(in) + Na(+)(in) = L-proline(out) + Na(+)(out). The enzyme catalyses L-methionine(in) + Na(+)(in) = L-methionine(out) + Na(+)(out). The catalysed reaction is L-histidine(in) + Na(+)(in) = L-histidine(out) + Na(+)(out). It carries out the reaction L-asparagine(in) + Na(+)(in) = L-asparagine(out) + Na(+)(out). It catalyses the reaction L-glutamine(in) + Na(+)(in) = L-glutamine(out) + Na(+)(out). The enzyme catalyses L-threonine(in) + Na(+)(in) = L-threonine(out) + Na(+)(out). The catalysed reaction is L-leucine(in) + Na(+)(in) = L-leucine(out) + Na(+)(out). It carries out the reaction L-phenylalanine(in) + Na(+)(in) = L-phenylalanine(out) + Na(+)(out). Inhibited by N-methyl-D-glucamine. Inhibited by choline. Allosteric regulation of sodium ions binding by pH. In terms of biological role, symporter that cotransports neutral amino acids and sodium ions from the extracellular to the intracellular side of the cell membrane. The transport is pH-sensitive, Li(+)-intolerant, electrogenic, driven by the Na(+) electrochemical gradient and cotransports of neutral amino acids and sodium ions with a stoichiometry of 1:1. This is Sodium-coupled neutral amino acid symporter 2 from Xenopus tropicalis (Western clawed frog).